Consider the following 166-residue polypeptide: Regulatory protein RecX (166 aa).

The protein belongs to the RecX family.

It localises to the cytoplasm. In terms of biological role, modulates RecA activity. The polypeptide is Regulatory protein RecX (Escherichia coli (strain K12 / MC4100 / BW2952)).